The primary structure comprises 172 residues: Large ribosomal subunit protein eL20 (172 aa).

It belongs to the eukaryotic ribosomal protein eL20 family. In terms of assembly, component of the large ribosomal subunit. Mature ribosomes consist of a small (40S) and a large (60S) subunit. The 40S subunit contains about 32 different proteins and 1 molecule of RNA (18S). The 60S subunit contains 45 different proteins and 3 molecules of RNA (25S, 5.8S and 5S).

The protein localises to the cytoplasm. Its function is as follows. Component of the ribosome, a large ribonucleoprotein complex responsible for the synthesis of proteins in the cell. The small ribosomal subunit (SSU) binds messenger RNAs (mRNAs) and translates the encoded message by selecting cognate aminoacyl-transfer RNA (tRNA) molecules. The large subunit (LSU) contains the ribosomal catalytic site termed the peptidyl transferase center (PTC), which catalyzes the formation of peptide bonds, thereby polymerizing the amino acids delivered by tRNAs into a polypeptide chain. The nascent polypeptides leave the ribosome through a tunnel in the LSU and interact with protein factors that function in enzymatic processing, targeting, and the membrane insertion of nascent chains at the exit of the ribosomal tunnel. The protein is Large ribosomal subunit protein eL20 of Candida albicans (strain SC5314 / ATCC MYA-2876) (Yeast).